The chain runs to 180 residues: ATP-dependent protease subunit HslV (180 aa).

T7 is an active-site residue. Residues G163, C166, and T169 each coordinate Na(+).

The protein belongs to the peptidase T1B family. HslV subfamily. A double ring-shaped homohexamer of HslV is capped on each side by a ring-shaped HslU homohexamer. The assembly of the HslU/HslV complex is dependent on binding of ATP.

The protein localises to the cytoplasm. The catalysed reaction is ATP-dependent cleavage of peptide bonds with broad specificity.. Allosterically activated by HslU binding. Its function is as follows. Protease subunit of a proteasome-like degradation complex believed to be a general protein degrading machinery. This Alcanivorax borkumensis (strain ATCC 700651 / DSM 11573 / NCIMB 13689 / SK2) protein is ATP-dependent protease subunit HslV.